Reading from the N-terminus, the 295-residue chain is Glutamyl-Q tRNA(Asp) synthetase (295 aa).

L-glutamate-binding positions include arginine 9–threonine 13 and glutamate 45. The 'HIGH' region motif lies at proline 12 to serine 22. Zn(2+)-binding residues include cysteine 101, cysteine 103, tyrosine 115, and cysteine 119. L-glutamate-binding residues include tyrosine 172 and arginine 190. Positions lysine 228 to serine 232 match the 'KMSKS' region motif. Lysine 231 provides a ligand contact to ATP.

This sequence belongs to the class-I aminoacyl-tRNA synthetase family. GluQ subfamily. Zn(2+) is required as a cofactor.

In terms of biological role, catalyzes the tRNA-independent activation of glutamate in presence of ATP and the subsequent transfer of glutamate onto a tRNA(Asp). Glutamate is transferred on the 2-amino-5-(4,5-dihydroxy-2-cyclopenten-1-yl) moiety of the queuosine in the wobble position of the QUC anticodon. This chain is Glutamyl-Q tRNA(Asp) synthetase, found in Pseudomonas entomophila (strain L48).